We begin with the raw amino-acid sequence, 293 residues long: Small ribosomal subunit biogenesis GTPase RsgA (293 aa).

The region spanning 63–223 (QNELVRPPIA…VADTPGFSAL (161 aa)) is the CP-type G domain. GTP contacts are provided by residues 112-115 (SKID) and 166-174 (GQSGVGKSS). Residues cysteine 247, cysteine 252, histidine 254, and cysteine 260 each coordinate Zn(2+).

It belongs to the TRAFAC class YlqF/YawG GTPase family. RsgA subfamily. In terms of assembly, monomer. Associates with 30S ribosomal subunit, binds 16S rRNA. Requires Zn(2+) as cofactor.

It is found in the cytoplasm. Its function is as follows. One of several proteins that assist in the late maturation steps of the functional core of the 30S ribosomal subunit. Helps release RbfA from mature subunits. May play a role in the assembly of ribosomal proteins into the subunit. Circularly permuted GTPase that catalyzes slow GTP hydrolysis, GTPase activity is stimulated by the 30S ribosomal subunit. The protein is Small ribosomal subunit biogenesis GTPase RsgA of Geobacillus kaustophilus (strain HTA426).